Consider the following 634-residue polypeptide: Polyadenylate-binding protein 1A (634 aa).

RRM domains lie at 11–89 (ASLY…WSQR), 99–175 (GNIF…RFKS), 191–268 (TNVY…RAQK), and 294–370 (VNLY…LAQR). A PABC domain is found at 541 to 618 (QEPLTASMLA…AVAVLQAHQA (78 aa)).

The protein belongs to the polyadenylate-binding protein type-1 family. Interacts with ybx1; interaction recruits pabpc1a on C5-methylcytosine (m5C)-containing mRNAs, preventing their degradation.

The protein localises to the cytoplasm. In terms of biological role, binds the poly(A) tail of mRNA. Prevents mRNA deadenylation and confers poly(A) stability. Binds to N6-methyladenosine (m6A)-containing mRNAs. Stimulates the translation of mRNAs to which it is bound, acting, at least in part, with dazl. Involved in the maternal-to-zygotic transition in early embryo via interaction with ybx1: interaction recruits pabpc1a on C5-methylcytosine (m5C)-containing maternal mRNAs, preventing their degradation. In Danio rerio (Zebrafish), this protein is Polyadenylate-binding protein 1A.